The sequence spans 140 residues: Truncated tyrosine phosphatase D1 (140 aa).

The 140-residue stretch at 1–140 (MRRPNCIAEI…SAQWIQFLKK (140 aa)) folds into the Tyrosine-protein phosphatase domain.

The protein belongs to the protein-tyrosine phosphatase family.

This Microplitis demolitor bracovirus (isolate Webb) (MdBV) protein is Truncated tyrosine phosphatase D1 (D1).